The primary structure comprises 542 residues: MARYIFITGGVVSSLGKGIAAATLAALLQARGYRVRLRKLDPYLNVDPGTMSPYQHGEVFVTDDGAETDLDLGHYERFTGHSANSQDNITTGRIYRNIIERERRGDYLGATVQVIPHVTDEIKRFITTGNEEFDFILCEIGGTVGDIEAMPFLEAIRQLHNELPRQSVIYVHLTLMPYISSVGELKTKPTQHSVKELQSIGISPDILLVRADRPIPETERCKLSLFCNVRPSAVIQALNMPTIYDVPMAYHKEGLDSEVLCAFGIDPTPKPKMDRWEDITYRIHHLEGEVTIAVVGKYTGLKDAYKSLIEAIAHGGLANKVKVNIEWIEAELFEKEDPASYLQKVHGILVPGAFGARGAEGKIQAIQFARERKVPFLGICFGMQLACIEVARNIAKIENASSSEFCETKNPIVGLMTEWLKEDVLEKRAKCGNLGGTMRLGAFAAELKEGSHIAKIYGMTRILERHRHRYEVNVDYKDKLEQCGLIFSGMSPDGVLPEAIEYADHPWFIGVQYHPELKSRPFDPHPLFSSFIEATVEQSRLV.

Residues Met-1–Ile-265 form an amidoligase domain region. A CTP-binding site is contributed by Ser-13. Residue Ser-13 coordinates UTP. Ser-14–Ile-19 is an ATP binding site. Tyr-54 serves as a coordination point for L-glutamine. Position 71 (Asp-71) interacts with ATP. Mg(2+)-binding residues include Asp-71 and Glu-139. CTP-binding positions include Asp-146–Glu-148, Lys-186–Gln-191, and Lys-222. Residues Lys-186–Gln-191 and Lys-222 each bind UTP. Residues Thr-291–Leu-541 form the Glutamine amidotransferase type-1 domain. Residue Ala-353 coordinates L-glutamine. The Nucleophile; for glutamine hydrolysis role is filled by Cys-380. Residues Phe-381–Gln-384, Glu-404, and Arg-469 contribute to the L-glutamine site. Active-site residues include His-514 and Glu-516.

The protein belongs to the CTP synthase family. In terms of assembly, homotetramer.

The catalysed reaction is UTP + L-glutamine + ATP + H2O = CTP + L-glutamate + ADP + phosphate + 2 H(+). The enzyme catalyses L-glutamine + H2O = L-glutamate + NH4(+). It catalyses the reaction UTP + NH4(+) + ATP = CTP + ADP + phosphate + 2 H(+). The protein operates within pyrimidine metabolism; CTP biosynthesis via de novo pathway; CTP from UDP: step 2/2. Its activity is regulated as follows. Allosterically activated by GTP, when glutamine is the substrate; GTP has no effect on the reaction when ammonia is the substrate. The allosteric effector GTP functions by stabilizing the protein conformation that binds the tetrahedral intermediate(s) formed during glutamine hydrolysis. Inhibited by the product CTP, via allosteric rather than competitive inhibition. In terms of biological role, catalyzes the ATP-dependent amination of UTP to CTP with either L-glutamine or ammonia as the source of nitrogen. Regulates intracellular CTP levels through interactions with the four ribonucleotide triphosphates. The polypeptide is CTP synthase (Bartonella quintana (strain Toulouse) (Rochalimaea quintana)).